The chain runs to 303 residues: Oxygen-dependent coproporphyrinogen-III oxidase (303 aa).

S93 serves as a coordination point for substrate. A divalent metal cation-binding residues include H97 and H107. H107 functions as the Proton donor in the catalytic mechanism. Substrate is bound at residue 109-111; it reads NVR. 2 residues coordinate a divalent metal cation: H146 and H176. The tract at residues 241–276 is important for dimerization; that stretch reads YVEFNLVYDRGTLFGLQSGGRTESILMSLPPQVRWG. 259-261 contributes to the substrate binding site; it reads GGR.

Belongs to the aerobic coproporphyrinogen-III oxidase family. Homodimer. A divalent metal cation serves as cofactor.

It is found in the cytoplasm. The enzyme catalyses coproporphyrinogen III + O2 + 2 H(+) = protoporphyrinogen IX + 2 CO2 + 2 H2O. Its pathway is porphyrin-containing compound metabolism; protoporphyrin-IX biosynthesis; protoporphyrinogen-IX from coproporphyrinogen-III (O2 route): step 1/1. Involved in the heme biosynthesis. Catalyzes the aerobic oxidative decarboxylation of propionate groups of rings A and B of coproporphyrinogen-III to yield the vinyl groups in protoporphyrinogen-IX. The protein is Oxygen-dependent coproporphyrinogen-III oxidase of Pseudomonas putida (strain ATCC 700007 / DSM 6899 / JCM 31910 / BCRC 17059 / LMG 24140 / F1).